Here is an 899-residue protein sequence, read N- to C-terminus: Conserved oligomeric Golgi complex subunit 3 (899 aa).

It belongs to the COG3 family. Component of the conserved oligomeric Golgi complex which is composed of eight different subunits and is required for normal Golgi morphology and localization.

The protein localises to the golgi apparatus membrane. In terms of biological role, involved in ER-Golgi transport. In Aedes aegypti (Yellowfever mosquito), this protein is Conserved oligomeric Golgi complex subunit 3.